The primary structure comprises 407 residues: Probable endo-beta-1,4-glucanase celB (407 aa).

A signal peptide spans 1 to 18; it reads MALTLAATALVLLPLVTA. Asn-136 carries an N-linked (GlcNAc...) asparagine glycan. Glu-216 (nucleophile) is an active-site residue. Glu-221 acts as the Proton donor in catalysis.

This sequence belongs to the glycosyl hydrolase 7 (cellulase C) family.

It localises to the secreted. The enzyme catalyses Endohydrolysis of (1-&gt;4)-beta-D-glucosidic linkages in cellulose, lichenin and cereal beta-D-glucans.. Functionally, has endoglucanase activity on substrates containing beta-1,4 glycosidic bonds, like in carboxymethylcellulose (CMC), hydroxyethylcellulose (HEC) and beta-glucan. Involved in the degradation of complex natural cellulosic substrates. In Neosartorya fischeri (strain ATCC 1020 / DSM 3700 / CBS 544.65 / FGSC A1164 / JCM 1740 / NRRL 181 / WB 181) (Aspergillus fischerianus), this protein is Probable endo-beta-1,4-glucanase celB (celB).